Reading from the N-terminus, the 478-residue chain is MALANPDSLKNSNLSSLPTIAAIATPLGRGGVGVIRLSGTRAYSIACTLTGKSEFKPRMASFCRFYQADGTVVDEGLVLYFKGPHSFTGEDVIELQGHGGMILQNQLLARVFELGAKQAGAGEFSYRAFDNDKLDLVQAEAIADAIDATSAAAASSAIRSLSGEFSKKINQLLEQLIHLRLHVEAAIDFPDEEDVDFLSDGVIQGKLEQTQEKIQHVLATAKQGQLLRDGIHVVLAGRPNAGKSSLLNRLAGQERAIVTDVAGTTRDTLQETVVLNGLTLHLTDTAGLRETEDTVERIGIERARTAITQADILLMVYDVTCDLEEEITPLQLAEQLFGELPEAKCLLIIANKSDLLNHNSSKGMTSISQEEIYNRGYEQVNVSCETGAGIDDLVETLCAKVGFHPPENSLIARTRHLDALRRTAEYLAEAHEQLTVFKAGELVAESLRQAQHSLGEITGEFSADDLLGKIFGSFCIGK.

R36, E94, and K133 together coordinate (6S)-5-formyl-5,6,7,8-tetrahydrofolate. The TrmE-type G domain occupies 230 to 402 (GIHVVLAGRP…LVETLCAKVG (173 aa)). N240 is a K(+) binding site. GTP-binding positions include 240–245 (NAGKSS), 259–265 (TDVAGTT), and 284–287 (DTAG). S244 is a Mg(2+) binding site. Residues T259, V261, and T264 each contribute to the K(+) site. T265 contributes to the Mg(2+) binding site. K478 contributes to the (6S)-5-formyl-5,6,7,8-tetrahydrofolate binding site.

The protein belongs to the TRAFAC class TrmE-Era-EngA-EngB-Septin-like GTPase superfamily. TrmE GTPase family. Homodimer. Heterotetramer of two MnmE and two MnmG subunits. K(+) is required as a cofactor.

The protein resides in the cytoplasm. In terms of biological role, exhibits a very high intrinsic GTPase hydrolysis rate. Involved in the addition of a carboxymethylaminomethyl (cmnm) group at the wobble position (U34) of certain tRNAs, forming tRNA-cmnm(5)s(2)U34. This chain is tRNA modification GTPase MnmE, found in Psychrobacter arcticus (strain DSM 17307 / VKM B-2377 / 273-4).